A 35-amino-acid polypeptide reads, in one-letter code: Jingzhaotoxin F5-21.66 (35 aa).

Intrachain disulfides connect C2–C16, C9–C21, and C15–C29.

This sequence belongs to the neurotoxin 10 (Hwtx-1) family. 48 (Jztx-F5) subfamily. As to expression, expressed by the venom gland.

The protein localises to the secreted. Its function is as follows. Probable ion channel inhibitor. In Chilobrachys guangxiensis (Chinese earth tiger tarantula), this protein is Jingzhaotoxin F5-21.66.